A 161-amino-acid polypeptide reads, in one-letter code: Nuclear transcription factor Y subunit B-3 (161 aa).

The segment at 1-23 (MADSDNDSGGHKDGGNASTREQD) is disordered. Position 2 is an N-acetylalanine (Ala-2). Over residues 8-23 (SGGHKDGGNASTREQD) the composition is skewed to basic and acidic residues. The DNA-binding element occupies 26–32 (LPIANVS). A subunit association domain (SAD) region spans residues 53–64 (VQECVSEFISFI). The segment at 114-146 (EKTTTAGRQGDKEGGGGGGGAGSGSGGAPMYGG) is disordered. The segment covering 128–146 (GGGGGGAGSGSGGAPMYGG) has biased composition (gly residues).

It belongs to the NFYB/HAP3 subunit family. In terms of assembly, heterotrimeric transcription factor composed of three components, NF-YA, NF-YB and NF-YC. NF-YB and NF-YC must interact and dimerize for NF-YA association and DNA binding. Component of a heat stress-inducible transcriptional complex with NF-YA and NF-YB subunits made, at least, of NFYA2, NFYB3 and DPB3-1 in cooperation with DREB2A. Binds directly with DPB3-1. Ubiquitous. Expressed in seedlings, petioles, hypocotyls, reproductive organ tissues and leaves.

Its subcellular location is the nucleus. The protein localises to the cytoplasm. It is found in the cytosol. Component of the NF-Y/HAP transcription factor complex. The NF-Y complex stimulates the transcription of various genes by recognizing and binding to a CCAAT motif in promoters. Promotes the expression of heat stress-inducible genes by contributing to the formation of a heat stress-specific transcriptional complex with NF-Y subunits (e.g. DPB3-1, NF-YA2 and NF-YB3) and DREB2A at the promoter of target genes, thus promoting heat tolerance. The polypeptide is Nuclear transcription factor Y subunit B-3 (Arabidopsis thaliana (Mouse-ear cress)).